Reading from the N-terminus, the 171-residue chain is Ribosome maturation factor RimM (171 aa).

A PRC barrel domain is found at 96 to 169; it reads EGEFFIADMI…KMIIDPIKGM (74 aa).

Belongs to the RimM family. As to quaternary structure, binds ribosomal protein uS19.

It is found in the cytoplasm. An accessory protein needed during the final step in the assembly of 30S ribosomal subunit, possibly for assembly of the head region. Essential for efficient processing of 16S rRNA. May be needed both before and after RbfA during the maturation of 16S rRNA. It has affinity for free ribosomal 30S subunits but not for 70S ribosomes. The polypeptide is Ribosome maturation factor RimM (Clostridioides difficile (strain 630) (Peptoclostridium difficile)).